Reading from the N-terminus, the 98-residue chain is Acylphosphatase (98 aa).

Residues threonine 12 to glutamine 98 form the Acylphosphatase-like domain. Residues arginine 27 and asparagine 45 contribute to the active site.

Belongs to the acylphosphatase family.

It carries out the reaction an acyl phosphate + H2O = a carboxylate + phosphate + H(+). The sequence is that of Acylphosphatase (acyP) from Burkholderia vietnamiensis (strain G4 / LMG 22486) (Burkholderia cepacia (strain R1808)).